The primary structure comprises 210 residues: Imidazole glycerol phosphate synthase subunit HisH (210 aa).

The 205-residue stretch at 1 to 205 (MIAVINYGAG…VELALSRGSG (205 aa)) folds into the Glutamine amidotransferase type-1 domain. The active-site Nucleophile is the Cys-79. Catalysis depends on residues His-180 and Glu-182.

As to quaternary structure, heterodimer of HisH and HisF.

It localises to the cytoplasm. The catalysed reaction is 5-[(5-phospho-1-deoxy-D-ribulos-1-ylimino)methylamino]-1-(5-phospho-beta-D-ribosyl)imidazole-4-carboxamide + L-glutamine = D-erythro-1-(imidazol-4-yl)glycerol 3-phosphate + 5-amino-1-(5-phospho-beta-D-ribosyl)imidazole-4-carboxamide + L-glutamate + H(+). The enzyme catalyses L-glutamine + H2O = L-glutamate + NH4(+). The protein operates within amino-acid biosynthesis; L-histidine biosynthesis; L-histidine from 5-phospho-alpha-D-ribose 1-diphosphate: step 5/9. In terms of biological role, IGPS catalyzes the conversion of PRFAR and glutamine to IGP, AICAR and glutamate. The HisH subunit catalyzes the hydrolysis of glutamine to glutamate and ammonia as part of the synthesis of IGP and AICAR. The resulting ammonia molecule is channeled to the active site of HisF. The chain is Imidazole glycerol phosphate synthase subunit HisH from Herpetosiphon aurantiacus (strain ATCC 23779 / DSM 785 / 114-95).